The primary structure comprises 383 residues: uncharacterized protein (383 aa).

Residues 1–55 (MSSKLTVNAHYSPLKDEDPLDHIDSQTALDSMETDSTGKSSLYFSKSDDPLSKDI) form a disordered region. Residues 13–24 (PLKDEDPLDHID) are compositionally biased toward basic and acidic residues. A compositionally biased stretch (polar residues) spans 25–44 (SQTALDSMETDSTGKSSLYF). Basic and acidic residues predominate over residues 46 to 55 (KSDDPLSKDI). 10 consecutive transmembrane segments (helical) span residues 87 to 107 (LTIFFAVSSQIVFAILVTILN), 112 to 132 (NIINAPLLMLSFQMAFTSLMV), 157 to 177 (FIFVKILGIVSKTYCLAFVPV), 179 to 199 (FYQISRGLLLPFTILLSFVLL), 205 to 225 (LFPFGGCLLVMLGFGFGVRFE), 228 to 248 (VAPIGIILGVWSSFTTAIESV), 262 to 282 (LIYIFSALMSVFCLLLSVASL), 299 to 319 (FFIVLILSSLSNFYLNIATFT), 329 to 349 (YMISVSARSILQTLLAVAFLG), and 352 to 372 (LYGNRIYGVILILVGTLLYTL).

The protein belongs to the TPT transporter family.

It localises to the membrane. This is an uncharacterized protein from Schizosaccharomyces pombe (strain 972 / ATCC 24843) (Fission yeast).